The sequence spans 137 residues: Drosulfakinins (137 aa).

A signal peptide spans 1-31 (MGLRSCTHFATLVIPLWALAFCFLVVVPVPA). A propeptide spanning residues 32-74 (QTNLQTSKGDRRLQDLESNMGAESDQPNANLVRPSLSRFGDKR) is cleaved from the precursor. Phe81 bears the Phenylalanine amide mark. A propeptide spanning residues 85–107 (VPRPMIPIELDLLMDNDDENTKA) is cleaved from the precursor. Tyr113 is modified (sulfotyrosine). A Phenylalanine amide modification is found at Phe118. The residue at position 130 (Tyr130) is a Sulfotyrosine. Phe135 is modified (phenylalanine amide).

It belongs to the gastrin/cholecystokinin family.

It localises to the secreted. Functionally, drosulfakinin-0 (DSK 0) plays diverse biological roles including regulating gut muscle contraction in adults but not in larvae. This chain is Drosulfakinins, found in Drosophila yakuba (Fruit fly).